The chain runs to 426 residues: Probable inactive metalloprotease YmfF (426 aa).

Residues H50 and E138 each contribute to the Zn(2+) site.

Belongs to the peptidase M16 family.

The chain is Probable inactive metalloprotease YmfF (ymfF) from Bacillus subtilis (strain 168).